A 417-amino-acid chain; its full sequence is Phosphoglycerate kinase 2 (417 aa).

Ser2 is subject to N-acetylserine. Residues Ser2 and Ser4 each carry the phosphoserine modification. At Lys11 the chain carries N6-acetyllysine. (2R)-3-phosphoglycerate is bound by residues Val23, Asp24, Phe25, Asn26, Gln38, and Arg39. Lys48 is subject to N6-acetyllysine. Residues Ser62, His63, Gly65, and Arg66 each coordinate (2R)-3-phosphoglycerate. Lys75, Lys86, and Lys97 each carry N6-acetyllysine. (2R)-3-phosphoglycerate-binding residues include Leu122 and Arg123. 2 positions are modified to N6-acetyllysine: Lys131 and Lys146. Positions 170 and 171 each coordinate (2R)-3-phosphoglycerate. At Tyr196 the chain carries Phosphotyrosine. At Lys199 the chain carries N6-acetyllysine. Position 214 (Gly214) interacts with ADP. Gly214 provides a ligand contact to CDP. AMP contacts are provided by Ala215 and Lys216. Residue Ala215 participates in ATP binding. Ala215 provides a ligand contact to Mg(2+). Residues Ala218 and Asp219 each contribute to the Mg(2+) site. Position 219 (Asp219) interacts with CDP. Lys220 serves as a coordination point for AMP. Lys220 serves as a coordination point for ATP. Gly238 provides a ligand contact to ADP. Gly238 contributes to the CDP binding site. Residue Gly239 participates in AMP binding. Gly239 provides a ligand contact to ATP. N6-acetyllysine is present on residues Lys267 and Lys291. Position 313 (Gly313) interacts with AMP. Gly313 contributes to the ATP binding site. Residues Gly338 and Phe343 each contribute to the CDP site. Phe343 lines the ADP pocket. Glu344 contacts AMP. The ATP site is built by Glu344, Asp375, and Thr376. Residue Asp375 participates in Mg(2+) binding.

It belongs to the phosphoglycerate kinase family. As to quaternary structure, monomer. Mg(2+) is required as a cofactor. As to expression, mainly found in round spermatids. Localized on the principle piece in the sperm (at protein level). Testis-specific. Expression significantly decreased in the testis of elderly men.

The protein localises to the cytoplasm. The enzyme catalyses (2R)-3-phosphoglycerate + ATP = (2R)-3-phospho-glyceroyl phosphate + ADP. It functions in the pathway carbohydrate degradation; glycolysis; pyruvate from D-glyceraldehyde 3-phosphate: step 2/5. Essential for sperm motility and male fertility. Not required for the completion of spermatogenesis. The chain is Phosphoglycerate kinase 2 (PGK2) from Homo sapiens (Human).